Reading from the N-terminus, the 845-residue chain is MGPRALSPLASLRLRWLLACGLLGPVLEAGRPDLEQTVHLSSYEIITPWRLTRERREALGPSSQQISYVIQAQGKQHIIHLERNTDLLPNDFVVYTYDKEGSLLSDHPNVQSHCHYRGYVEGVQNSAVAVSACFGLRGLLHLENASFGIEPLHNSSHFEHIFYPMDGIHQEPLRCGVSNRDTEKEGTQGDEEEHPSVTQLLRRRRAVLPQTRYVELFIVVDKERYDMMGRNQTAVREEMIRLANYLDSMYIMLNIRIVLVGLEIWTDRNPINIIGGAGDVLGNFVQWREKFLITRWRHDSAQLVLKKGFGGTAGMAFVGTVCSRSHAGGINVFGQITVETFASIVAHELGHNLGMNHDDGRECFCGAKSCIMNSGASGSRNFSSCSAEDFEKLTLNKGGSCLLNIPKPDEAYSAPSCGNKLVDPGEECDCGTAKECEVDPCCEGSTCKLKSFAECAYGDCCKDCQFLPGGSMCRGKTSECDVPEYCNGSSQFCPPDVFIQNGYPCQNSKAYCYNGMCQYYDAQCQVIFGSKAKAAPRDCFIEVNSKGDRFGNCGFSGSEYKKCATGNALCGKLQCENVQDMPVFGIVPAIIQTPSRGTKCWGVDFQLGSDVPDPGMVNEGTKCDAGKICRNFQCVNASVLNYDCDIQGKCHGHGVCNSNKNCHCEDGWAPPHCDTKGYGGSVDSGPTYNAKSTALRDGLLVFFFLIVPLVAAAIFLFIKRDELRKTFRKKRSQMSDGRNQANVSRQPGDPSISRPPGGPNVSRPPGGPGVSRPPGGPGVSRPPGGPGVSRPPPGHGNRFPVPTYAAKQPAQFPSRPPPPQPKISSQGNLIPARPAPAPPLYSSLT.

Positions 1 to 29 (MGPRALSPLASLRLRWLLACGLLGPVLEA) are cleaved as a signal peptide. Residues 30 to 697 (GRPDLEQTVH…YNAKSTALRD (668 aa)) lie on the Extracellular side of the membrane. Residues Asn-144, Asn-154, and Asn-231 are each glycosylated (N-linked (GlcNAc...) asparagine). The Peptidase M12B domain maps to 212 to 406 (RYVELFIVVD…KGGSCLLNIP (195 aa)). 4 cysteine pairs are disulfide-bonded: Cys-322–Cys-401, Cys-363–Cys-385, Cys-365–Cys-370, and Cys-473–Cys-493. His-347 provides a ligand contact to Zn(2+). The active site involves Glu-348. Zn(2+)-binding residues include His-351 and His-357. Asn-381, Asn-487, and Asn-636 each carry an N-linked (GlcNAc...) asparagine glycan. The Disintegrin domain occupies 414–501 (APSCGNKLVD…FCPPDVFIQN (88 aa)). 3 cysteine pairs are disulfide-bonded: Cys-644-Cys-656, Cys-650-Cys-662, and Cys-664-Cys-673. Positions 644-698 (CDIQGKCHGHGVCNSNKNCHCEDGWAPPHCDTKGYGGSVDSGPTYNAKSTALRDG) constitute an EGF-like domain. Residues 698–718 (GLLVFFFLIVPLVAAAIFLFI) form a helical membrane-spanning segment. At 719–845 (KRDELRKTFR…PAPPLYSSLT (127 aa)) the chain is on the cytoplasmic side. Residues 729-845 (KKRSQMSDGR…PAPPLYSSLT (117 aa)) form a disordered region. The span at 734 to 745 (MSDGRNQANVSR) shows a compositional bias: polar residues. Residues 783-794 (PGGPGVSRPPPG) are compositionally biased toward pro residues.

Interacts with SH3GL2 and SNX9 through its cytoplasmic tail. Interacts with ITGA6. Requires Zn(2+) as cofactor. In terms of processing, proteolytically cleaved in the trans-Golgi network before it reaches the plasma membrane to generate a mature protein. The removal of the pro-domain occurs via cleavage at two different sites. Processed most likely by a pro-protein convertase such as furin, at the boundary between the pro-domain and the catalytic domain. An additional upstream cleavage pro-protein convertase site (Arg-56/Glu-57) has an important role in the activation of ADAM9. Post-translationally, phosphorylation is induced in vitro by phorbol-12-myristate-13-acetate (PMA).

Its subcellular location is the cell membrane. With respect to regulation, synthesized as an inactive form which is proteolytically cleaved to generate an active enzyme. Processing at the upstream site is particularly important for activation of the proenzyme, whereas processing at the boundary between the pro-domain and the catalytic domain does not appear to be essential. Inhibited by hydroxamic acid-based inhibitors. Functionally, metalloprotease that cleaves and releases a number of molecules with important roles in tumorigenesis and angiogenesis, such as TEK, KDR, EPHB4, CD40, VCAM1 and CDH5. May mediate cell-cell, cell-matrix interactions and regulate the motility of cells via interactions with integrins. The chain is Disintegrin and metalloproteinase domain-containing protein 9 from Mus musculus (Mouse).